Reading from the N-terminus, the 134-residue chain is Lymphocyte antigen 6G (134 aa).

A signal peptide spans 1 to 26; that stretch reads MDTCHIAKSCVLILLVVLLCAERAQG. The UPAR/Ly6 domain occupies 27–118; that stretch reads LECYNCIGVP…PTGGSSWTMA (92 aa). 5 cysteine pairs are disulfide-bonded: cysteine 29–cysteine 53, cysteine 32–cysteine 41, cysteine 46–cysteine 74, cysteine 78–cysteine 98, and cysteine 99–cysteine 104. Residue asparagine 105 is the site of GPI-anchor amidated asparagine attachment. The propeptide at 106–134 is removed in mature form; the sequence is AAVPTGGSSWTMAGVLLFSLVSVLLQTFL.

As to expression, expressed in bone marrow.

The protein localises to the cell membrane. In Mus musculus (Mouse), this protein is Lymphocyte antigen 6G (Ly6g).